The primary structure comprises 171 residues: Dual specificity protein phosphatase OPG106 (171 aa).

One can recognise a Tyrosine-protein phosphatase domain in the interval 23–171 (SPTIMTRVTN…IIEKYVIDKN (149 aa)). C110 (phosphocysteine intermediate) is an active-site residue.

Belongs to the protein-tyrosine phosphatase family. Non-receptor class dual specificity subfamily. In terms of assembly, homodimer.

It localises to the virion. It is found in the host cytoplasm. The enzyme catalyses O-phospho-L-tyrosyl-[protein] + H2O = L-tyrosyl-[protein] + phosphate. It carries out the reaction O-phospho-L-seryl-[protein] + H2O = L-seryl-[protein] + phosphate. Its function is as follows. Serine/tyrosine phosphatase which down-regulates cellular antiviral response by dephosphorylating activated host STAT1 and blocking interferon (IFN)-stimulated innate immune responses. Dephosphorylates the OPG144 protein. The polypeptide is Dual specificity protein phosphatase OPG106 (OPG106) (Homo sapiens (Human)).